We begin with the raw amino-acid sequence, 84 residues long: Exodeoxyribonuclease 7 small subunit (84 aa).

This sequence belongs to the XseB family. As to quaternary structure, heterooligomer composed of large and small subunits.

The protein localises to the cytoplasm. It catalyses the reaction Exonucleolytic cleavage in either 5'- to 3'- or 3'- to 5'-direction to yield nucleoside 5'-phosphates.. Functionally, bidirectionally degrades single-stranded DNA into large acid-insoluble oligonucleotides, which are then degraded further into small acid-soluble oligonucleotides. The sequence is that of Exodeoxyribonuclease 7 small subunit from Bartonella henselae (strain ATCC 49882 / DSM 28221 / CCUG 30454 / Houston 1) (Rochalimaea henselae).